The primary structure comprises 385 residues: ADP,ATP carrier protein 2, mitochondrial (385 aa).

The N-terminal 74 residues, 1 to 74 (MVEQTQHPTI…ATTTSPVFVQ (74 aa)), are a transit peptide targeting the mitochondrion. Solcar repeat units follow at residues 82–175 (TNFA…FKRL), 187–280 (KWFA…VKPV), and 288–374 (DSFF…LQLI). Helical transmembrane passes span 84-111 (FAIDFMMGGVSAAVSKTAAAPIERVKLL), 152-176 (TANVIRYFPTQALNFAFKDYFKRLF), 185-205 (YWKWFAGNLASGGAAGASSLL), 256-277 (FNISCAGIIVYRGLYFGLYDSV), and 291-311 (FASFALGWLITNGAGLASYPI). 2 residues coordinate ADP: arginine 157 and lysine 169. Arginine 315 provides a ligand contact to ADP. An important for transport activity region spans residues 315-320 (RRRMMM). The short motif at 315–320 (RRRMMM) is the Nucleotide carrier signature motif element. The chain crosses the membrane as a helical span at residues 351 to 371 (AGANILRAVAGAGVLAGYDKL).

This sequence belongs to the mitochondrial carrier (TC 2.A.29) family. In terms of assembly, monomer.

The protein resides in the mitochondrion inner membrane. The catalysed reaction is ADP(in) + ATP(out) = ADP(out) + ATP(in). The matrix-open state (m-state) is inhibited by the membrane-permeable bongkrekic acid (BKA). The cytoplasmic-open state (c-state) is inhibited by the membrane-impermeable toxic inhibitor carboxyatractyloside (CATR). ADP:ATP antiporter that mediates import of ADP into the mitochondrial matrix for ATP synthesis, and export of ATP out to fuel the cell. Cycles between the cytoplasmic-open state (c-state) and the matrix-open state (m-state): operates by the alternating access mechanism with a single substrate-binding site intermittently exposed to either the cytosolic (c-state) or matrix (m-state) side of the inner mitochondrial membrane. This Arabidopsis thaliana (Mouse-ear cress) protein is ADP,ATP carrier protein 2, mitochondrial (AAC2).